The primary structure comprises 177 residues: Large ribosomal subunit protein uL6 (177 aa).

The protein belongs to the universal ribosomal protein uL6 family. In terms of assembly, part of the 50S ribosomal subunit.

This protein binds to the 23S rRNA, and is important in its secondary structure. It is located near the subunit interface in the base of the L7/L12 stalk, and near the tRNA binding site of the peptidyltransferase center. The sequence is that of Large ribosomal subunit protein uL6 from Pseudomonas fluorescens (strain ATCC BAA-477 / NRRL B-23932 / Pf-5).